The sequence spans 341 residues: Ribulose-5-phosphate reductase 1 (341 aa).

4 residues coordinate Zn(2+): Cys38, His64, Glu65, and Glu144.

This sequence belongs to the zinc-containing alcohol dehydrogenase family. As to quaternary structure, heterodimer together with TarI. Can also form a dimer of heterodimers. Zn(2+) is required as a cofactor.

The enzyme catalyses D-ribitol 5-phosphate + NADP(+) = D-ribulose 5-phosphate + NADPH + H(+). The protein operates within cell wall biogenesis; poly(ribitol phosphate) teichoic acid biosynthesis. Its function is as follows. Catalyzes the NADPH dependent reduction of D-ribulose 5-phosphate to D-ribitol 5-phosphate. In Staphylococcus aureus (strain NCTC 8325 / PS 47), this protein is Ribulose-5-phosphate reductase 1.